The primary structure comprises 305 residues: Ribonuclease BN (305 aa).

Zn(2+) is bound by residues histidine 64, histidine 66, aspartate 68, histidine 69, histidine 141, aspartate 212, and histidine 270. Catalysis depends on aspartate 68, which acts as the Proton acceptor.

Belongs to the RNase Z family. RNase BN subfamily. Homodimer. Requires Zn(2+) as cofactor.

Its function is as follows. Zinc phosphodiesterase, which has both exoribonuclease and endoribonuclease activities. The polypeptide is Ribonuclease BN (Escherichia coli O17:K52:H18 (strain UMN026 / ExPEC)).